The chain runs to 476 residues: Adenosylhomocysteinase (476 aa).

The substrate site is built by threonine 67, aspartate 142, and glutamate 202. 203-205 (TTT) is a binding site for NAD(+). Residues lysine 232 and aspartate 236 each contribute to the substrate site. NAD(+) is bound by residues asparagine 237, 266-271 (GYGDVG), glutamate 289, asparagine 324, 345-347 (IGH), and asparagine 390.

The protein belongs to the adenosylhomocysteinase family. NAD(+) serves as cofactor.

It is found in the cytoplasm. It catalyses the reaction S-adenosyl-L-homocysteine + H2O = L-homocysteine + adenosine. Its pathway is amino-acid biosynthesis; L-homocysteine biosynthesis; L-homocysteine from S-adenosyl-L-homocysteine: step 1/1. May play a key role in the regulation of the intracellular concentration of adenosylhomocysteine. The chain is Adenosylhomocysteinase from Synechococcus sp. (strain CC9605).